The primary structure comprises 299 residues: UDP-N-acetylenolpyruvoylglucosamine reductase (299 aa).

An FAD-binding PCMH-type domain is found at 19–192 (LGGQALAEVR…AAVTLQLRRS (174 aa)). Arginine 169 is a catalytic residue. Cysteine 221 serves as the catalytic Proton donor. The active site involves glutamate 292.

It belongs to the MurB family. FAD serves as cofactor.

The protein resides in the cytoplasm. It catalyses the reaction UDP-N-acetyl-alpha-D-muramate + NADP(+) = UDP-N-acetyl-3-O-(1-carboxyvinyl)-alpha-D-glucosamine + NADPH + H(+). The protein operates within cell wall biogenesis; peptidoglycan biosynthesis. In terms of biological role, cell wall formation. This is UDP-N-acetylenolpyruvoylglucosamine reductase from Oleidesulfovibrio alaskensis (strain ATCC BAA-1058 / DSM 17464 / G20) (Desulfovibrio alaskensis).